The primary structure comprises 777 residues: Endonuclease MutS2 (777 aa).

328-335 serves as a coordination point for ATP; the sequence is GPNTGGKT. The region spanning 702-777 is the Smr domain; the sequence is LDLRGKRYEE…GSGATIVIFK (76 aa).

Belongs to the DNA mismatch repair MutS family. MutS2 subfamily. Homodimer. Binds to stalled ribosomes, contacting rRNA.

Endonuclease that is involved in the suppression of homologous recombination and thus may have a key role in the control of bacterial genetic diversity. Functionally, acts as a ribosome collision sensor, splitting the ribosome into its 2 subunits. Detects stalled/collided 70S ribosomes which it binds and splits by an ATP-hydrolysis driven conformational change. Acts upstream of the ribosome quality control system (RQC), a ribosome-associated complex that mediates the extraction of incompletely synthesized nascent chains from stalled ribosomes and their subsequent degradation. Probably generates substrates for RQC. The chain is Endonuclease MutS2 from Streptococcus sanguinis (strain SK36).